The following is a 73-amino-acid chain: NADH dehydrogenase [ubiquinone] 1 beta subcomplex subunit 3-B (73 aa).

A helical membrane pass occupies residues 31 to 48 (ALPGLGIGVAAFCVYLVG).

The protein belongs to the complex I NDUFB3 subunit family. As to quaternary structure, complex I is composed of at least 49 different subunits.

The protein localises to the mitochondrion inner membrane. Its function is as follows. Accessory subunit of the mitochondrial membrane respiratory chain NADH dehydrogenase (Complex I), that is believed not to be involved in catalysis. Complex I functions in the transfer of electrons from NADH to the respiratory chain. The immediate electron acceptor for the enzyme is believed to be ubiquinone. The polypeptide is NADH dehydrogenase [ubiquinone] 1 beta subcomplex subunit 3-B (Arabidopsis thaliana (Mouse-ear cress)).